Consider the following 117-residue polypeptide: Large ribosomal subunit protein bL20 (117 aa).

The protein belongs to the bacterial ribosomal protein bL20 family.

Functionally, binds directly to 23S ribosomal RNA and is necessary for the in vitro assembly process of the 50S ribosomal subunit. It is not involved in the protein synthesizing functions of that subunit. The sequence is that of Large ribosomal subunit protein bL20 from Rickettsia peacockii (strain Rustic).